A 205-amino-acid polypeptide reads, in one-letter code: Large ribosomal subunit protein bL25 (205 aa).

The interval Phe178–Glu205 is disordered. Over residues Glu182–Glu197 the composition is skewed to acidic residues.

The protein belongs to the bacterial ribosomal protein bL25 family. CTC subfamily. In terms of assembly, part of the 50S ribosomal subunit; part of the 5S rRNA/L5/L18/L25 subcomplex. Contacts the 5S rRNA. Binds to the 5S rRNA independently of L5 and L18.

In terms of biological role, this is one of the proteins that binds to the 5S RNA in the ribosome where it forms part of the central protuberance. The protein is Large ribosomal subunit protein bL25 of Cutibacterium acnes (strain DSM 16379 / KPA171202) (Propionibacterium acnes).